The primary structure comprises 397 residues: Polygalacturonase (397 aa).

Residues 1 to 22 (MGSYLGIYTILVLCLLGYSANA) form the signal peptide. 4 PbH1 repeats span residues 169 to 195 (GKNM…HLGR), 196 to 217 (CEGV…SVGD), 219 to 239 (MKNL…SVGS), and 249 to 270 (VTDI…RIKT). Residue Asn-171 is glycosylated (N-linked (GlcNAc...) asparagine). The Proton donor role is filled by Asp-210. A disulfide bridge connects residues Cys-212 and Cys-229. His-233 is an active-site residue. The N-linked (GlcNAc...) asparagine glycan is linked to Asn-256. Intrachain disulfides connect Cys-341–Cys-347 and Cys-370–Cys-386.

The protein belongs to the glycosyl hydrolase 28 family. In terms of tissue distribution, pollen.

The protein localises to the secreted. Its subcellular location is the cell wall. The enzyme catalyses (1,4-alpha-D-galacturonosyl)n+m + H2O = (1,4-alpha-D-galacturonosyl)n + (1,4-alpha-D-galacturonosyl)m.. Its function is as follows. May function in depolymerizing pectin during pollen development, germination, and tube growth. The protein is Polygalacturonase of Brassica napus (Rape).